Consider the following 240-residue polypeptide: Phosphoribosylaminoimidazole-succinocarboxamide synthase (240 aa).

This sequence belongs to the SAICAR synthetase family.

The catalysed reaction is 5-amino-1-(5-phospho-D-ribosyl)imidazole-4-carboxylate + L-aspartate + ATP = (2S)-2-[5-amino-1-(5-phospho-beta-D-ribosyl)imidazole-4-carboxamido]succinate + ADP + phosphate + 2 H(+). It functions in the pathway purine metabolism; IMP biosynthesis via de novo pathway; 5-amino-1-(5-phospho-D-ribosyl)imidazole-4-carboxamide from 5-amino-1-(5-phospho-D-ribosyl)imidazole-4-carboxylate: step 1/2. The protein is Phosphoribosylaminoimidazole-succinocarboxamide synthase of Anoxybacillus flavithermus (strain DSM 21510 / WK1).